The sequence spans 1416 residues: MKDLVKFLKAQSKTSEDFDVIKIGLASPDMIRSWSFGEVKKPETINYRTFKPERDGLFCARIFGPVKDYECLCGKYKRLKHRGVICEKCGVEVTQTKVRRERMGHIELASPVAHIWFLKSLPSRIGLLLDMPLRDIERVLYFEMYIVTEPGMTDLERGQLLTEEQYLDAEDRWQDEFEAKMGAEAIQDLLKGMDLEAECEKLREELQETNSETKRKKITKRLKLLEAFVQSGNKPEWMVMTVLPVLPPDLRPLVPLDGGRFATSDLNDLYRRVINRNNRLKRLLDLIAPDIIVRNEKRMLQESVDALLDNGRRGRAITGSNRRPLKSLADMIKGKQGRFRQNLLGKRVDYSGRSVITVGPYLHLHQCGLPKKMALELFRPFIYAKLESRGYATTIKAAKKMVEREEAIVWDILAEVIREHPILLNRAPTLHRLGIQAFEPILIEGKAIQLHPLVCAAFNADFDGDQMAVHVPLTLEAQLEARALMMSTNNVLSPANGDPIIVPSQDVVLGLYYMTREKVNGKGEGMLLQDPREAEKAYRTGEAELHSRVKVRITEYVKNEAGEFDAKTTLTDTTIGRAILWMIAPKGMPYSLFNQTLGKKAISKLINEAYRRLGLKEAVMFADQIMYTGFAYAARSGSSVGIDDMEIPAKKYEIISAAEEEVAEIQEQFQSGLVTAGERYNKVIDIWAAANERVAKAMMENLSQEEVINREGNPEKQASFNSIFMMADSGARGSAAQIRQLAGMRGLMARPDGSIIETPITANFREGLNVLQYFISTHGARKGLADTALKTANSGYLTRRLVDVAQDLVIVEDDCGTHEGLVMTPLIEGGDEKVPLRELVLGRVAAEDILKPGTEEVLIPRNTLLDEKLCDVLDANSVDSVKVRSVVTCDTDFGVCAKCYGRDLARGHLINQGEAVGVIAAQSIGEPGTQLTMRTFHIGGAASAAAKESSVQVKNTGTVHLMNAKFVTNDESKLVLTSRNTELTITDAFGRTKEHYKVPYGAVLSKGDGQEVTAGETIANWDPHTMPVVSEVSGFVKFVDIIDGLTVTRQTDELTGLSSIVVQDVGERATAGKDLRPTIKLVDANGNDIFLPETDVLAQYFLPGKAIVSLDDGAAVKVGEPLARIPQESVGTKDITGGLPRVADLFEARKPKEPAILAEISGIVSFGKETKGKRRLLITPTEGETYEEMIPKWRQLNVFEGEMVQRGDVISDGAETPHDILRLRGVRAVTEYIVNEVQDVYRLQGVKINDKHIEVIVRQMLRKAVITKAYDSEFLEGEQVEVARVKIVNRQREAEGKPPVEFERELLGITKASLATESFISAASFQETTRVLTEAAVAGKRDELRGLKENVIVGRLIPAGTGFAYHQNRHKHRLVDDVVAKLSEEDEATIADEFVMTADDASASLAEMLNMADDAE.

Zn(2+) contacts are provided by Cys-71, Cys-73, Cys-86, and Cys-89. Mg(2+) is bound by residues Asp-461, Asp-463, and Asp-465. Zn(2+) contacts are provided by Cys-815, Cys-889, Cys-896, and Cys-899.

Belongs to the RNA polymerase beta' chain family. In terms of assembly, the RNAP catalytic core consists of 2 alpha, 1 beta, 1 beta' and 1 omega subunit. When a sigma factor is associated with the core the holoenzyme is formed, which can initiate transcription. Requires Mg(2+) as cofactor. It depends on Zn(2+) as a cofactor.

It carries out the reaction RNA(n) + a ribonucleoside 5'-triphosphate = RNA(n+1) + diphosphate. In terms of biological role, DNA-dependent RNA polymerase catalyzes the transcription of DNA into RNA using the four ribonucleoside triphosphates as substrates. This is DNA-directed RNA polymerase subunit beta' from Haemophilus influenzae (strain PittEE).